The sequence spans 59 residues: Large ribosomal subunit protein uL30 (59 aa).

Belongs to the universal ribosomal protein uL30 family. In terms of assembly, part of the 50S ribosomal subunit.

The polypeptide is Large ribosomal subunit protein uL30 (Leptospira biflexa serovar Patoc (strain Patoc 1 / ATCC 23582 / Paris)).